The chain runs to 77 residues: Metallothionein-like protein 2B (77 aa).

The protein belongs to the metallothionein superfamily. Type 15 family. In terms of tissue distribution, expressed in vascular tissues of all organs. Expressed in root and leaf phloem, pollen and root hairs.

In terms of biological role, metallothioneins have a high content of cysteine residues that bind various heavy metals. Functions as a metal chelator of copper (Cu) and zinc (Zn). Functions cooperatively with the phytochelatin synthase PCS1 to protect plants from Cu and cadmium toxicity. Plays a role in Cu homeostasis, specifically in the remobilization of Cu from senescing leaves. The mobilization of Cu from internal sources is important for seed development. This Arabidopsis thaliana (Mouse-ear cress) protein is Metallothionein-like protein 2B (MT2B).